Here is an 83-residue protein sequence, read N- to C-terminus: Short neurotoxin C (83 aa).

A signal peptide spans 1–21 (MKTLLLTLVVVTMVCLDLAYT). 4 disulfides stabilise this stretch: Cys-24-Cys-45, Cys-38-Cys-62, Cys-64-Cys-75, and Cys-76-Cys-81.

Belongs to the three-finger toxin family. Short-chain subfamily. Type I alpha-neurotoxin sub-subfamily. Expressed by the venom gland.

The protein resides in the secreted. Functionally, binds to muscle nicotinic acetylcholine receptor (nAChR) and inhibit acetylcholine from binding to the receptor, thereby impairing neuromuscular transmission. The chain is Short neurotoxin C from Laticauda colubrina (Yellow-lipped sea krait).